A 171-amino-acid polypeptide reads, in one-letter code: uncharacterized protein (171 aa).

Residues 5-25 (FLLTIFALWVGGFGYYLYLIN) traverse the membrane as a helical segment.

It is found in the membrane. This is an uncharacterized protein from Rickettsia conorii (strain ATCC VR-613 / Malish 7).